The primary structure comprises 597 residues: uncharacterized protein (597 aa).

Residues 16–78 (VGRLVWVRRR…LENSKTVKAF (63 aa)) enclose the PWWP domain. 2 disordered regions span residues 126 to 210 (NLCN…MRGL) and 449 to 482 (QLKG…STPH). Residues 134 to 143 (EDSKRCLSGK) are compositionally biased toward basic and acidic residues. Residues 144 to 161 (EDEDSGSSDAEETEDDEL) are compositionally biased toward acidic residues. Residues 166–185 (EQLQSSISSQEMNNVGASKV) show a composition bias toward polar residues. Basic residues predominate over residues 450–460 (LKGKRNSRQMS). The span at 461 to 470 (KKQEERRNVY) shows a compositional bias: basic and acidic residues.

This is an uncharacterized protein from Arabidopsis thaliana (Mouse-ear cress).